The sequence spans 341 residues: Ribose-phosphate pyrophosphokinase 5 (341 aa).

Positions 152, 154, and 167 each coordinate Mg(2+).

It belongs to the ribose-phosphate pyrophosphokinase family.

Its subcellular location is the cytoplasm. The enzyme catalyses D-ribose 5-phosphate + ATP = 5-phospho-alpha-D-ribose 1-diphosphate + AMP + H(+). It participates in metabolic intermediate biosynthesis; 5-phospho-alpha-D-ribose 1-diphosphate biosynthesis; 5-phospho-alpha-D-ribose 1-diphosphate from D-ribose 5-phosphate (route I): step 1/1. In terms of biological role, 5-phosphoribose 1-diphosphate synthase involved in nucleotide, histidine, and tryptophan biosynthesis. Active in heteromultimeric complexes with other 5-phosphoribose 1-diphosphate synthases. The polypeptide is Ribose-phosphate pyrophosphokinase 5 (Schizosaccharomyces pombe (strain 972 / ATCC 24843) (Fission yeast)).